Consider the following 373-residue polypeptide: Beta sliding clamp (373 aa).

The protein belongs to the beta sliding clamp family. As to quaternary structure, forms a ring-shaped head-to-tail homodimer around DNA which binds and tethers DNA polymerases and other proteins to the DNA. The DNA replisome complex has a single clamp-loading complex (3 tau and 1 each of delta, delta', psi and chi subunits) which binds 3 Pol III cores (1 core on the leading strand and 2 on the lagging strand) each with a beta sliding clamp dimer. Additional proteins in the replisome are other copies of gamma, psi and chi, Ssb, DNA helicase and RNA primase.

Its subcellular location is the cytoplasm. In terms of biological role, confers DNA tethering and processivity to DNA polymerases and other proteins. Acts as a clamp, forming a ring around DNA (a reaction catalyzed by the clamp-loading complex) which diffuses in an ATP-independent manner freely and bidirectionally along dsDNA. Initially characterized for its ability to contact the catalytic subunit of DNA polymerase III (Pol III), a complex, multichain enzyme responsible for most of the replicative synthesis in bacteria; Pol III exhibits 3'-5' exonuclease proofreading activity. The beta chain is required for initiation of replication as well as for processivity of DNA replication. The polypeptide is Beta sliding clamp (dnaN) (Mycoplasmopsis pulmonis (strain UAB CTIP) (Mycoplasma pulmonis)).